The following is a 456-amino-acid chain: GTPase Der (456 aa).

EngA-type G domains lie at 4 to 169 and 177 to 352; these read PIVA…PAVE and IKVA…ESHK. GTP-binding positions include 10–17, 57–61, 120–123, 183–190, 230–234, and 295–298; these read GRPNVGKS, DTGGL, NKCE, DTAGI, and NKWD. The 86-residue stretch at 353–438 folds into the KH-like domain; that stretch reads RRVSTSVINE…PIILLWRSKK (86 aa).

Belongs to the TRAFAC class TrmE-Era-EngA-EngB-Septin-like GTPase superfamily. EngA (Der) GTPase family. Associates with the 50S ribosomal subunit.

In terms of biological role, GTPase that plays an essential role in the late steps of ribosome biogenesis. The chain is GTPase Der from Nostoc punctiforme (strain ATCC 29133 / PCC 73102).